An 835-amino-acid chain; its full sequence is Pre-mRNA-processing protein 40C (835 aa).

Positions 1 to 20 are enriched in polar residues; the sequence is MEGENTTDPPYTTAASSGQS. Residues 1-22 form a disordered region; the sequence is MEGENTTDPPYTTAASSGQSIF. 2 consecutive WW domains span residues 243-276 and 295-328; these read GNRLDAWTAHKSEAGVLYYYNSVTGQSTYEKPPG and SLPGTDWALVSTNDGKKYYYNNKTKVSSWQIPAE. Residues 397–459 form a disordered region; that stretch reads SGMPVSSTIT…DSGPSKEECS (63 aa). Positions 400 to 428 are enriched in polar residues; the sequence is PVSSTITSEANSGKTTEVTPSGESGNSTG. FF domains follow at residues 455–509, 519–577, and 590–643; these read KEEC…YVKT, RAAH…RVLS, and RAAA…YIAE. Disordered stretches follow at residues 649 to 677 and 714 to 738; these read RGDDHEMKARDEEDKLRERERELRKRKER and TESKPILERDPQKRASNPDLEPADK. 2 FF domains span residues 691–748 and 750–815; these read RKEA…HVKS and YERC…YVED.

It belongs to the PRPF40 family. Interacts (via the WW domains) with the phosphorylated C-terminal domain of NRPB1 (via CTD domain). As to expression, expressed in roots, shoots, rosette leaves, cauline leaves, stems and flowers.

Its subcellular location is the nucleus. In terms of biological role, binds the phosphorylated C-terminal domain (CTD) of the largest subunit of RNA polymerase II and functions as a scaffold for RNA processing machineries. May be involved in pre-mRNA splicing. This Arabidopsis thaliana (Mouse-ear cress) protein is Pre-mRNA-processing protein 40C.